The sequence spans 151 residues: Ribosome maturation factor RimP (151 aa).

It belongs to the RimP family.

The protein localises to the cytoplasm. Required for maturation of 30S ribosomal subunits. The protein is Ribosome maturation factor RimP of Haemophilus influenzae (strain 86-028NP).